Here is a 592-residue protein sequence, read N- to C-terminus: Methionine--tRNA ligase (592 aa).

A 'HIGH' region motif is present at residues 12–22 (PYANGPFHVGH). Zn(2+) is bound by residues Cys-144, Cys-147, Cys-157, and Cys-160. The 'KMSKS' region signature appears at 342 to 346 (KMSTS). Thr-345 lines the ATP pocket.

Belongs to the class-I aminoacyl-tRNA synthetase family. MetG type 1 subfamily. In terms of assembly, monomer. Requires Zn(2+) as cofactor.

Its subcellular location is the cytoplasm. It carries out the reaction tRNA(Met) + L-methionine + ATP = L-methionyl-tRNA(Met) + AMP + diphosphate. Functionally, is required not only for elongation of protein synthesis but also for the initiation of all mRNA translation through initiator tRNA(fMet) aminoacylation. The polypeptide is Methionine--tRNA ligase (Roseiflexus castenholzii (strain DSM 13941 / HLO8)).